A 689-amino-acid chain; its full sequence is Transmembrane protein 214 (689 aa).

Disordered stretches follow at residues 1-37 and 70-107; these read MATK…NRRA and RQNK…KQGR. Alanine 2 is modified (N-acetylalanine). Over residues 20 to 31 the composition is skewed to gly residues; the sequence is PGVGAGAGGRGG. Residues asparagine 269 and asparagine 307 are each glycosylated (N-linked (GlcNAc...) asparagine). 2 helical membrane-spanning segments follow: residues 480 to 500 and 616 to 636; these read LPWT…LCHD and LPLL…LEAL.

It belongs to the TMEM214 family. In terms of assembly, constitutively interacts with CASP4; required for the localization of procaspase 4 to the ER.

The protein resides in the endoplasmic reticulum membrane. Critical mediator, in cooperation with CASP4, of endoplasmic reticulum-stress induced apoptosis. Required or the activation of CASP4 following endoplasmic reticulum stress. This chain is Transmembrane protein 214 (TMEM214), found in Homo sapiens (Human).